Here is a 259-residue protein sequence, read N- to C-terminus: 4-hydroxy-tetrahydrodipicolinate reductase (259 aa).

Residues 9 to 14 (GAGGRM) and Glu-35 contribute to the NAD(+) site. Arg-36 is an NADP(+) binding site. Residues 92-94 (GTT) and 116-119 (APNM) each bind NAD(+). His-149 acts as the Proton donor/acceptor in catalysis. His-150 is a (S)-2,3,4,5-tetrahydrodipicolinate binding site. Residue Lys-153 is the Proton donor of the active site. Residue 159–160 (GT) participates in (S)-2,3,4,5-tetrahydrodipicolinate binding.

Belongs to the DapB family.

It localises to the cytoplasm. It catalyses the reaction (S)-2,3,4,5-tetrahydrodipicolinate + NAD(+) + H2O = (2S,4S)-4-hydroxy-2,3,4,5-tetrahydrodipicolinate + NADH + H(+). It carries out the reaction (S)-2,3,4,5-tetrahydrodipicolinate + NADP(+) + H2O = (2S,4S)-4-hydroxy-2,3,4,5-tetrahydrodipicolinate + NADPH + H(+). Its pathway is amino-acid biosynthesis; L-lysine biosynthesis via DAP pathway; (S)-tetrahydrodipicolinate from L-aspartate: step 4/4. Catalyzes the conversion of 4-hydroxy-tetrahydrodipicolinate (HTPA) to tetrahydrodipicolinate. This Nitratidesulfovibrio vulgaris (strain DSM 19637 / Miyazaki F) (Desulfovibrio vulgaris) protein is 4-hydroxy-tetrahydrodipicolinate reductase.